The chain runs to 249 residues: 2,3-bisphosphoglycerate-dependent phosphoglycerate mutase (249 aa).

Substrate is bound by residues 9–16, 22–23, arginine 61, 88–91, lysine 99, 115–116, and 184–185; these read RHGESEWN, TG, ERHY, RR, and GN. The active-site Tele-phosphohistidine intermediate is histidine 10. Catalysis depends on glutamate 88, which acts as the Proton donor/acceptor.

This sequence belongs to the phosphoglycerate mutase family. BPG-dependent PGAM subfamily.

The catalysed reaction is (2R)-2-phosphoglycerate = (2R)-3-phosphoglycerate. The protein operates within carbohydrate degradation; glycolysis; pyruvate from D-glyceraldehyde 3-phosphate: step 3/5. Functionally, catalyzes the interconversion of 2-phosphoglycerate and 3-phosphoglycerate. The sequence is that of 2,3-bisphosphoglycerate-dependent phosphoglycerate mutase from Cutibacterium acnes (strain DSM 16379 / KPA171202) (Propionibacterium acnes).